We begin with the raw amino-acid sequence, 236 residues long: Phosphoribosylaminoimidazole-succinocarboxamide synthase (236 aa).

It belongs to the SAICAR synthetase family.

It catalyses the reaction 5-amino-1-(5-phospho-D-ribosyl)imidazole-4-carboxylate + L-aspartate + ATP = (2S)-2-[5-amino-1-(5-phospho-beta-D-ribosyl)imidazole-4-carboxamido]succinate + ADP + phosphate + 2 H(+). It functions in the pathway purine metabolism; IMP biosynthesis via de novo pathway; 5-amino-1-(5-phospho-D-ribosyl)imidazole-4-carboxamide from 5-amino-1-(5-phospho-D-ribosyl)imidazole-4-carboxylate: step 1/2. This Rickettsia prowazekii (strain Madrid E) protein is Phosphoribosylaminoimidazole-succinocarboxamide synthase (purC).